A 470-amino-acid chain; its full sequence is Uronate isomerase (470 aa).

The protein belongs to the metallo-dependent hydrolases superfamily. Uronate isomerase family.

It carries out the reaction D-glucuronate = D-fructuronate. It catalyses the reaction aldehydo-D-galacturonate = keto-D-tagaturonate. The protein operates within carbohydrate metabolism; pentose and glucuronate interconversion. This Salmonella newport (strain SL254) protein is Uronate isomerase.